The following is a 219-amino-acid chain: MVDLKTKAFDFAKNFAIALDGPAASGKGTIGLILAKKFSLQYFQSSIVYRQLAFDCINQKIDVTDMDAVIALSKALKLDSHLDLEHESIGDMASQIAVISEVRNNLNKYLINLVKTTPRIIMEGRDIGTVVVPEADLKIFITANPQIRAERRYKQLQAKGKKCILDEILRQIILRDKRDKERKAAPLLPASDALIIDTSELSAMEVVEEVTNYIKNKIA.

ATP is bound at residue 21 to 29 (GPAASGKGT).

It belongs to the cytidylate kinase family. Type 1 subfamily.

The protein resides in the cytoplasm. The catalysed reaction is CMP + ATP = CDP + ADP. It carries out the reaction dCMP + ATP = dCDP + ADP. The protein is Cytidylate kinase of Rickettsia akari (strain Hartford).